Reading from the N-terminus, the 859-residue chain is Rab effector MyRIP (859 aa).

In terms of domain architecture, RabBD spans 4–124; it reads KLDLSGLTDD…AQSLEWFYNN (121 aa). Residues 63 to 105 form an FYVE-type zinc finger; that stretch reads CCMRCCSPFTFLVNTKRQCGDCKFNVCKSCCSYQKHEKAWVCC. The tract at residues 143 to 560 is myosin-binding; sequence RKHRLESGAC…LDTHQVSDDL (418 aa). Positions 193–209 are PKA-binding; that stretch reads VALRVAEEAIEEAISKA. Positions 232 to 248 are negative regulation of PKA-binding; the sequence is LTEELATTILQKIIRKQ. Residues 251-285 form a disordered region; sequence KSEQQVEEEPGWPHPQSCSTKVADEGTSASPGGYR. Serine 298 is modified (phosphoserine). Disordered regions lie at residues 302–374, 386–629, and 783–812; these read EEAL…KPKS, VASA…SQSV, and DQKQRTQVQTIDTSRQQRRKLPAPPVKAEK. Basic and acidic residues predominate over residues 316–326; that stretch reads QPRDQGQHPRA. Serine 350 is modified (phosphoserine). The segment covering 393-403 has biased composition (acidic residues); the sequence is MGSDSEEDFDW. Residues 435–450 are compositionally biased toward low complexity; sequence PIAASPSSALSPNPEA. Composition is skewed to basic and acidic residues over residues 484-494 and 607-617; these read AAEKMRLHGEL and SEPKTESENQK. The segment at 495–856 is actin-binding; sequence DVNFNPQLAS…DLMEPALESA (362 aa). Composition is skewed to polar residues over residues 618–629 and 787–796; these read ESLSSEDNSQSV and RTQVQTIDTS.

Binds MYO5A, MYO7A and F-actin. Binds RAB27A that has been activated by GTP-binding via its N-terminus. Interacts with PRKAR2A. Interacts with components of the exocyst complex, including EXOC3 and EXOC4. Detected in brain, skin, heart, adrenal medulla, pancreas, intestine, liver, kidney, muscle and testis.

The protein localises to the cytoplasm. It localises to the perinuclear region. It is found in the cytoplasmic vesicle. The protein resides in the secretory vesicle. Functionally, rab effector protein involved in melanosome transport. Serves as link between melanosome-bound RAB27A and the motor proteins MYO5A and MYO7A. May link RAB27A-containing vesicles to actin filaments. Functions as a protein kinase A-anchoring protein (AKAP). May act as a scaffolding protein that links PKA to components of the exocytosis machinery, thus facilitating exocytosis, including insulin release. This is Rab effector MyRIP (MYRIP) from Homo sapiens (Human).